Consider the following 199-residue polypeptide: dITP/XTP pyrophosphatase (199 aa).

A substrate-binding site is contributed by 9–14 (TGNKGK). Positions 41 and 70 each coordinate Mg(2+). Asp70 (proton acceptor) is an active-site residue. Substrate contacts are provided by residues Ser71, 157–160 (FGYD), Lys180, and 185–186 (HR).

Belongs to the HAM1 NTPase family. In terms of assembly, homodimer. Mg(2+) is required as a cofactor.

It carries out the reaction XTP + H2O = XMP + diphosphate + H(+). The catalysed reaction is dITP + H2O = dIMP + diphosphate + H(+). It catalyses the reaction ITP + H2O = IMP + diphosphate + H(+). Pyrophosphatase that catalyzes the hydrolysis of nucleoside triphosphates to their monophosphate derivatives, with a high preference for the non-canonical purine nucleotides XTP (xanthosine triphosphate), dITP (deoxyinosine triphosphate) and ITP. Seems to function as a house-cleaning enzyme that removes non-canonical purine nucleotides from the nucleotide pool, thus preventing their incorporation into DNA/RNA and avoiding chromosomal lesions. In Mannheimia succiniciproducens (strain KCTC 0769BP / MBEL55E), this protein is dITP/XTP pyrophosphatase.